Here is a 230-residue protein sequence, read N- to C-terminus: Sugar fermentation stimulation protein homolog (230 aa).

The protein belongs to the SfsA family.

This chain is Sugar fermentation stimulation protein homolog, found in Clostridium botulinum (strain 657 / Type Ba4).